The sequence spans 120 residues: Small cysteine and glycine repeat-containing protein 2 (120 aa).

A 19 X 2 AA repeats of CG region spans residues 4-104 (CGCGGCGGCG…TCHSCGCGCG (101 aa)).

It belongs to the KRTAP type 28 family.

Functionally, in the hair cortex, hair keratin intermediate filaments are embedded in an interfilamentous matrix, consisting of hair keratin-associated proteins (KRTAP), which are essential for the formation of a rigid and resistant hair shaft through their extensive disulfide bond cross-linking with abundant cysteine residues of hair keratins. The matrix proteins include the high-sulfur and high-glycine-tyrosine keratins. The sequence is that of Small cysteine and glycine repeat-containing protein 2 from Homo sapiens (Human).